The chain runs to 103 residues: N(4)-acetylcytidine amidohydrolase (103 aa).

An ASCH domain is found at isoleucine 6–lysine 101. The active-site Proton acceptor is the lysine 21. The Nucleophile role is filled by threonine 24. Glutamate 74 acts as the Proton donor in catalysis.

Belongs to the N(4)-acetylcytidine amidohydrolase family.

The enzyme catalyses N(4)-acetylcytidine + H2O = cytidine + acetate + H(+). It catalyses the reaction N(4)-acetyl-2'-deoxycytidine + H2O = 2'-deoxycytidine + acetate + H(+). The catalysed reaction is N(4)-acetylcytosine + H2O = cytosine + acetate + H(+). Catalyzes the hydrolysis of N(4)-acetylcytidine (ac4C). The protein is N(4)-acetylcytidine amidohydrolase (yqfB) of Escherichia coli (strain SE11).